A 599-amino-acid chain; its full sequence is DNA primase (599 aa).

Residues 38–62 (CPFHDEKTPSFTVSEDKQICHCFGC) form a CHC2-type zinc finger. Residues 260-341 (DEIVLLEGFM…NVFVIQLPSG (82 aa)) form the Toprim domain. Mg(2+)-binding residues include Glu-266, Asp-310, and Asp-312.

This sequence belongs to the DnaG primase family. Monomer. Interacts with DnaB. Zn(2+) is required as a cofactor. Requires Mg(2+) as cofactor.

It carries out the reaction ssDNA + n NTP = ssDNA/pppN(pN)n-1 hybrid + (n-1) diphosphate.. RNA polymerase that catalyzes the synthesis of short RNA molecules used as primers for DNA polymerase during DNA replication. This is DNA primase from Staphylococcus aureus (strain MRSA252).